A 215-amino-acid polypeptide reads, in one-letter code: Large ribosomal subunit protein uL3 (215 aa).

N5-methylglutamine is present on Gln156.

The protein belongs to the universal ribosomal protein uL3 family. Part of the 50S ribosomal subunit. Forms a cluster with proteins L14 and L19. Methylated by PrmB.

Functionally, one of the primary rRNA binding proteins, it binds directly near the 3'-end of the 23S rRNA, where it nucleates assembly of the 50S subunit. The chain is Large ribosomal subunit protein uL3 from Xylella fastidiosa (strain M12).